The sequence spans 318 residues: Glycine--tRNA ligase alpha subunit (318 aa).

The protein belongs to the class-II aminoacyl-tRNA synthetase family. In terms of assembly, tetramer of two alpha and two beta subunits.

The protein localises to the cytoplasm. It carries out the reaction tRNA(Gly) + glycine + ATP = glycyl-tRNA(Gly) + AMP + diphosphate. The sequence is that of Glycine--tRNA ligase alpha subunit from Methylibium petroleiphilum (strain ATCC BAA-1232 / LMG 22953 / PM1).